The sequence spans 378 residues: Putative glutamate--cysteine ligase 2-1 (378 aa).

This sequence belongs to the glutamate--cysteine ligase type 2 family. YbdK subfamily.

The catalysed reaction is L-cysteine + L-glutamate + ATP = gamma-L-glutamyl-L-cysteine + ADP + phosphate + H(+). Its function is as follows. ATP-dependent carboxylate-amine ligase which exhibits weak glutamate--cysteine ligase activity. This is Putative glutamate--cysteine ligase 2-1 from Corynebacterium efficiens (strain DSM 44549 / YS-314 / AJ 12310 / JCM 11189 / NBRC 100395).